Here is a 377-residue protein sequence, read N- to C-terminus: UPF0754 membrane protein LMHCC_0318 (377 aa).

2 helical membrane-spanning segments follow: residues 1–21 and 357–377; these read MSVL…GAMT and YLGG…AMWI.

The protein belongs to the UPF0754 family.

The protein resides in the cell membrane. This is UPF0754 membrane protein LMHCC_0318 from Listeria monocytogenes serotype 4a (strain HCC23).